The following is a 155-amino-acid chain: Ribosomal RNA large subunit methyltransferase H (155 aa).

S-adenosyl-L-methionine is bound by residues leucine 72, glycine 103, and phenylalanine 122–tryptophan 127.

It belongs to the RNA methyltransferase RlmH family. As to quaternary structure, homodimer.

It is found in the cytoplasm. The catalysed reaction is pseudouridine(1915) in 23S rRNA + S-adenosyl-L-methionine = N(3)-methylpseudouridine(1915) in 23S rRNA + S-adenosyl-L-homocysteine + H(+). Functionally, specifically methylates the pseudouridine at position 1915 (m3Psi1915) in 23S rRNA. This is Ribosomal RNA large subunit methyltransferase H from Paracoccus denitrificans (strain Pd 1222).